The chain runs to 720 residues: Iron-sulfur clusters transporter ATM1, mitochondrial (720 aa).

The transit peptide at 1–36 (MIMFRSLSVTPVWKAGLSLSHRSIPINSRLSSVRNY) directs the protein to the mitochondrion. Residues 37-129 (ISIGCANKTG…PSGDNKVKIR (93 aa)) are Mitochondrial matrix-facing. Over residues 64-77 (RFNSSSNGNGTDKN) the composition is skewed to polar residues. The interval 64–102 (RFNSSSNGNGTDKNASVAPKTEVKKIVPPKPSTNGKSKT) is disordered. A helical transmembrane segment spans residues 130–151 (VLIALALLIGAKLLNVQVPFFF). The ABC transmembrane type-1 domain maps to 130–421 (VLIALALLIG…LGSVYRELKQ (292 aa)). The Mitochondrial intermembrane segment spans residues 152-175 (KQTIDSMNIEWGPDVATVLPVAIT). The helical transmembrane segment at 176–199 (MTILSYGAARFGAVMFGELRNAVF) threads the bilayer. Over 200 to 248 (AKVAQNAIRKVSLQTFQHLMKLDLGWHLSRQTGGLTRAMDRGTKGISYV) the chain is Mitochondrial matrix. A helical membrane pass occupies residues 249–272 (LSAMVFHMIPITFEISVVCGILTY). A topological domain (mitochondrial intermembrane) is located at residue Gln-273. Residues 274 to 294 (FGSSFAAMTFVTMLLYSFFTF) traverse the membrane as a helical segment. The Mitochondrial matrix segment spans residues 295–360 (KTTAWRTEFR…SQIKVAQSLA (66 aa)). Residues 300 to 304 (RTEFR) and 363 to 366 (NAGQ) each bind glutathione. The helical transmembrane segment at 361-379 (FLNAGQNFIFTSALTAMMY) threads the bilayer. Topologically, residues 380 to 394 (MGASGVMEGALTVGD) are mitochondrial intermembrane. The helical transmembrane segment at 395–416 (LVLINQLVFQLSVPLNFLGSVY) threads the bilayer. Gly-413 is a glutathione binding site. Residues 417–720 (RELKQSLIDM…EKEPRTSKKD (304 aa)) are Mitochondrial matrix-facing. The ABC transporter domain maps to 456-692 (IKFENVTFGY…PNSLYSELWN (237 aa)). ATP is bound by residues Tyr-465 and 489 to 500 (GPSGSGKSTILR).

Belongs to the ABC transporter superfamily. ABCB family. Heavy Metal importer (TC 3.A.1.210) subfamily. As to quaternary structure, homodimer.

It is found in the mitochondrion inner membrane. Its function is as follows. Performs an essential function in the generation of cytoplasmic iron-sulfur proteins by mediating the ATP-dependent export of Fe/S cluster precursors synthesized by NFS1 and other mitochondrial proteins. Hydrolyzes ATP. Binds glutathione and may function by transporting a glutathione-conjugated iron-sulfur compound. The protein is Iron-sulfur clusters transporter ATM1, mitochondrial of Kluyveromyces lactis (strain ATCC 8585 / CBS 2359 / DSM 70799 / NBRC 1267 / NRRL Y-1140 / WM37) (Yeast).